The following is a 374-amino-acid chain: DNA replication and repair protein RecF (374 aa).

ATP is bound at residue 30-37 (GPNAQGKS).

Belongs to the RecF family.

Its subcellular location is the cytoplasm. Its function is as follows. The RecF protein is involved in DNA metabolism; it is required for DNA replication and normal SOS inducibility. RecF binds preferentially to single-stranded, linear DNA. It also seems to bind ATP. This chain is DNA replication and repair protein RecF, found in Acaryochloris marina (strain MBIC 11017).